We begin with the raw amino-acid sequence, 144 residues long: HTH-type transcriptional regulator BilQ (144 aa).

The HTH marR-type domain occupies 1–134 (MEQTFAYYTT…LFTLLQKLGK (134 aa)). Residues 48–71 (QRELAAAVRADEGYAARSVEKLLQ) constitute a DNA-binding region (H-T-H motif).

Transcription regulator that regulates expression of the bilirubin reductase operon (bilQ, bilR and bilS). The chain is HTH-type transcriptional regulator BilQ from Clostridium symbiosum (strain WAL-14163).